The chain runs to 301 residues: GTPase Era (301 aa).

An Era-type G domain is found at 4–173; it reads KAGFVALIGK…LECISEHLSP (170 aa). The interval 12-19 is G1; sequence GKPNAGKS. Position 12–19 (12–19) interacts with GTP; the sequence is GKPNAGKS. Residues 38–42 are G2; the sequence is NATRK. The segment at 64–67 is G3; the sequence is DTPG. GTP contacts are provided by residues 64–68 and 122–125; these read DTPGL and SKID. Positions 122-125 are G4; the sequence is SKID. The G5 stretch occupies residues 152–154; it reads LSA. In terms of domain architecture, KH type-2 spans 204-280; the sequence is LSDEIPYESD…FLNLQVIAQK (77 aa).

This sequence belongs to the TRAFAC class TrmE-Era-EngA-EngB-Septin-like GTPase superfamily. Era GTPase family. As to quaternary structure, monomer.

It is found in the cytoplasm. It localises to the cell inner membrane. Functionally, an essential GTPase that binds both GDP and GTP, with rapid nucleotide exchange. Plays a role in 16S rRNA processing and 30S ribosomal subunit biogenesis and possibly also in cell cycle regulation and energy metabolism. In Helicobacter acinonychis (strain Sheeba), this protein is GTPase Era.